A 73-amino-acid polypeptide reads, in one-letter code: uncharacterized protein (73 aa).

This is an uncharacterized protein from Thermoproteus tenax virus 1 (strain KRA1) (TTV1).